The following is a 580-amino-acid chain: Rap guanine nucleotide exchange factor 5 (580 aa).

Residues 67 to 200 enclose the N-terminal Ras-GEF domain; sequence DRYVVVSGTP…ELKEFQKILG (134 aa). Residues 344-579 form the Ras-GEF domain; it reads NTWDLALELM…FELSHRLEPR (236 aa).

In terms of tissue distribution, in the embryo, expressed in young neurons of the developing telencephalon, diencephalon and hindbrain. Not expressed in progenitor cells in the ventricular zone.

The protein localises to the nucleus. In terms of biological role, guanine nucleotide exchange factor (GEF) for RAP1A, RAP2A and MRAS/M-Ras-GTP. Its association with MRAS inhibits Rap1 activation. In Rattus norvegicus (Rat), this protein is Rap guanine nucleotide exchange factor 5 (Rapgef5).